Consider the following 174-residue polypeptide: Crossover junction endodeoxyribonuclease RuvC (174 aa).

Catalysis depends on residues D8, E69, and D141. Mg(2+) is bound by residues D8, E69, and D141.

Belongs to the RuvC family. In terms of assembly, homodimer which binds Holliday junction (HJ) DNA. The HJ becomes 2-fold symmetrical on binding to RuvC with unstacked arms; it has a different conformation from HJ DNA in complex with RuvA. In the full resolvosome a probable DNA-RuvA(4)-RuvB(12)-RuvC(2) complex forms which resolves the HJ. The cofactor is Mg(2+).

It localises to the cytoplasm. It carries out the reaction Endonucleolytic cleavage at a junction such as a reciprocal single-stranded crossover between two homologous DNA duplexes (Holliday junction).. Its function is as follows. The RuvA-RuvB-RuvC complex processes Holliday junction (HJ) DNA during genetic recombination and DNA repair. Endonuclease that resolves HJ intermediates. Cleaves cruciform DNA by making single-stranded nicks across the HJ at symmetrical positions within the homologous arms, yielding a 5'-phosphate and a 3'-hydroxyl group; requires a central core of homology in the junction. The consensus cleavage sequence is 5'-(A/T)TT(C/G)-3'. Cleavage occurs on the 3'-side of the TT dinucleotide at the point of strand exchange. HJ branch migration catalyzed by RuvA-RuvB allows RuvC to scan DNA until it finds its consensus sequence, where it cleaves and resolves the cruciform DNA. This is Crossover junction endodeoxyribonuclease RuvC from Xanthomonas oryzae pv. oryzae (strain PXO99A).